We begin with the raw amino-acid sequence, 297 residues long: Homoserine kinase (297 aa).

ATP is bound at residue 82–92 (PLTRGLGSSAS).

This sequence belongs to the GHMP kinase family. Homoserine kinase subfamily.

The protein localises to the cytoplasm. It carries out the reaction L-homoserine + ATP = O-phospho-L-homoserine + ADP + H(+). The protein operates within amino-acid biosynthesis; L-threonine biosynthesis; L-threonine from L-aspartate: step 4/5. In terms of biological role, catalyzes the ATP-dependent phosphorylation of L-homoserine to L-homoserine phosphate. This chain is Homoserine kinase, found in Bacillus mycoides (strain KBAB4) (Bacillus weihenstephanensis).